We begin with the raw amino-acid sequence, 307 residues long: MSHRPILKNFPQVDHHQASGKLGDLYNDIHDTLRVPWVAFGIRVMSQFEHFVPAAWEALKPQISTRYAEEGADKVREAAIIPGSAPANPTPALLANGWSEEEIAKLKATLDGLNYGNPKYLILISAWNEAWHGRDAGGGAGKRLDSVQSERLPYGLPQGVEKFHLIDPEAADDQVQCLLRDIRDAFLHHGPASDYRVLAAWPDYLEIAFRDTLKPVALTTEFELTTSRIRKIAREHVRGFDGAGGVAWRDMADRMTPEEIAGLTGVLFMYNRFIADITVAIIRLKQAFGSAEDATENKFRVWPTEKG.

The protein belongs to the HAD-like hydrolase superfamily. S-2-haloalkanoic acid dehalogenase family. In terms of assembly, homodimer.

It catalyses the reaction an (S)-2-haloacid + H2O = a (2R)-2-hydroxycarboxylate + a halide anion + H(+). It carries out the reaction an (R)-2-haloacid + H2O = a (2S)-2-hydroxycarboxylate + a halide anion + H(+). Dehalogenates both (S)- and (R)-2-haloalkanoic acids to the corresponding (R)- and (S)-hydroxyalkanoic acids, respectively, with inversion of configuration at C-2. Acts on 2-haloalkanoic acids whose carbon chain lengths are five or less. This Pseudomonas sp. (strain 113) protein is 2-haloacid dehalogenase, configuration-inverting.